The sequence spans 32 residues: Cathepsin B-like cysteine proteinase (32 aa).

Positions 1-22 (KPNYKRQFEPFSDELIHYINLE) are cleaved as a propeptide — activation peptide.

The protein belongs to the peptidase C1 family.

Thiol protease. The polypeptide is Cathepsin B-like cysteine proteinase (Fasciola hepatica (Liver fluke)).